Consider the following 1453-residue polypeptide: DNA-directed RNA polymerase IV subunit 1 (1453 aa).

Residues Cys-56, Cys-59, Cys-67, His-70, Cys-97, Cys-100, and Cys-121 each contribute to the Zn(2+) site. The Mg(2+) site is built by Asp-447, Asp-449, and Asp-451. Residues 806–818 (PLESFVHSVTSRD) are bridging helix.

Belongs to the RNA polymerase beta' chain family. As to quaternary structure, component of the RNA polymerase IV complex. Interacts with NRPD2, NRPD3, NRPD3B, NRPD4, NRPD5, NRPD5B, NRPD6A, NRPD7, NRPD7B, NRPD9A, NRPD9B, NRPD10, NRPD11, NRPD12, RDR2, RDM4, CLSY1, CLSY2, CLSY3, CLSY4 and SHH1. As to expression, mostly expressed in flowers, and, to a lower extent, in leaves.

It localises to the nucleus. The catalysed reaction is RNA(n) + a ribonucleoside 5'-triphosphate = RNA(n+1) + diphosphate. Functionally, DNA-dependent RNA polymerase catalyzes the transcription of DNA into RNA using the four ribonucleoside triphosphates as substrates. Largest and catalytic component of RNA polymerase IV which mediates 24-nt short-interfering RNAs (siRNA) accumulation. Implicated in siRNA-directed heterochromatin formation through the action of DCL3 and AGO4, and subsequent DNA methylation-dependent silencing of targeted sequences. Essential component of a self-reinforcing loop coupling de novo DNA methylation to siRNA production. Required for intercellular but not intracellular RNA interference (RNAi) leading to systemic post-transcriptional gene silencing. Involved in the maintenance of post-transcriptional RNA silencing. This is DNA-directed RNA polymerase IV subunit 1 (NRPD1) from Arabidopsis thaliana (Mouse-ear cress).